The primary structure comprises 500 residues: Glycerol kinase (500 aa).

An ADP-binding site is contributed by threonine 13. ATP-binding residues include threonine 13, threonine 14, and serine 15. Threonine 13 contacts sn-glycerol 3-phosphate. Arginine 17 contributes to the ADP binding site. The sn-glycerol 3-phosphate site is built by arginine 83, glutamate 84, tyrosine 135, and aspartate 244. Glycerol contacts are provided by arginine 83, glutamate 84, tyrosine 135, aspartate 244, and glutamine 245. ADP contacts are provided by threonine 266 and glycine 309. Residues threonine 266, glycine 309, glutamine 313, and glycine 410 each contribute to the ATP site. ADP contacts are provided by glycine 410 and asparagine 414.

This sequence belongs to the FGGY kinase family.

The catalysed reaction is glycerol + ATP = sn-glycerol 3-phosphate + ADP + H(+). The protein operates within polyol metabolism; glycerol degradation via glycerol kinase pathway; sn-glycerol 3-phosphate from glycerol: step 1/1. With respect to regulation, inhibited by fructose 1,6-bisphosphate (FBP). Its function is as follows. Key enzyme in the regulation of glycerol uptake and metabolism. Catalyzes the phosphorylation of glycerol to yield sn-glycerol 3-phosphate. This is Glycerol kinase from Burkholderia ambifaria (strain MC40-6).